The following is an 846-amino-acid chain: Interleukin cytokine receptor-related protein 1 (846 aa).

Residues 1–25 form the signal peptide; that stretch reads MFLHSPALLIWLFLFCLAGPQAVRT. Residues 26-418 lie on the Extracellular side of the membrane; the sequence is EPYNSTSSSS…KEDTTWTWHT (393 aa). N-linked (GlcNAc...) asparagine glycans are attached at residues Asn-29, Asn-79, Asn-186, Asn-214, Asn-339, and Asn-395. Positions 388 to 409 are disordered; the sequence is EKPPATSNQTEESDGKAEKDKK. Residues 400–409 show a composition bias toward basic and acidic residues; it reads SDGKAEKDKK. A helical membrane pass occupies residues 419–439; sequence YAITGGAIIAILFILSVCAGL. At 440-846 the chain is on the cytoplasmic side; sequence KCYKKFNNKK…AFHDEVIGIH (407 aa). The region spanning 476–618 is the SEFIR domain; that stretch reads SISVLIVYSH…IPNSLMTMTT (143 aa). The segment at 737–771 is disordered; it reads GPIHVEPTEPEVLEPAEEPMEEAEEDEEDEDDVDS. Residues 744-771 show a composition bias toward acidic residues; sequence TEPEVLEPAEEPMEEAEEDEEDEDDVDS.

In terms of assembly, component of a heterodimeric receptor complex composed of ilcr-1 and ilcr-2. The receptor complex interacts with actl-1 and ilc-17.1 with the interaction being mediated by ilcr-2. In terms of tissue distribution, expressed in most neurons.

The protein localises to the cell membrane. Its function is as follows. Forms a receptor complex together with receptor ilcr-2, which upon activation acts as a modulator of neuronal activity. Binding of the ligand ilc-17.1 to the ilcr-1/2 receptor complex triggers a signaling cascade that activates the downstream signaling components actl-1, pik-1 and nfki-1, and results in increased neuronal activity in RMG interneurons in response to input from oxygen-sensing neurons. This leads to increased animal movement and promotes aggregation behavior. This chain is Interleukin cytokine receptor-related protein 1, found in Caenorhabditis elegans.